Consider the following 393-residue polypeptide: Elongation factor Tu (393 aa).

The tr-type G domain maps to K10–V203. The interval G19–T26 is G1. G19 to T26 contacts GTP. T26 serves as a coordination point for Mg(2+). The G2 stretch occupies residues G60–S64. Residues D81 to G84 are G3. Residues D81–H85 and N136–D139 contribute to the GTP site. The segment at N136 to D139 is G4. Residues S173–L175 form a G5 region.

This sequence belongs to the TRAFAC class translation factor GTPase superfamily. Classic translation factor GTPase family. EF-Tu/EF-1A subfamily. Monomer.

Its subcellular location is the cytoplasm. It carries out the reaction GTP + H2O = GDP + phosphate + H(+). In terms of biological role, GTP hydrolase that promotes the GTP-dependent binding of aminoacyl-tRNA to the A-site of ribosomes during protein biosynthesis. The protein is Elongation factor Tu of Chlorobaculum tepidum (strain ATCC 49652 / DSM 12025 / NBRC 103806 / TLS) (Chlorobium tepidum).